The primary structure comprises 397 residues: F-box protein At4g11590 (397 aa).

In terms of domain architecture, F-box spans 24-70 (EKNFNDVPLDVAIEIFMRLPVKSVARFLLLSKFWAEIIRSRHFITSF).

As to quaternary structure, part of a SCF (ASK-cullin-F-box) protein ligase complex. Interacts with ASK16.

The protein resides in the nucleus. The protein operates within protein modification; protein ubiquitination. Functionally, component of SCF(ASK-cullin-F-box) E3 ubiquitin ligase complexes, which may mediate the ubiquitination and subsequent proteasomal degradation of target proteins. In Arabidopsis thaliana (Mouse-ear cress), this protein is F-box protein At4g11590.